The following is a 334-amino-acid chain: Nucleoid-associated protein YPN_2714 (334 aa).

Belongs to the YejK family.

Its subcellular location is the cytoplasm. It is found in the nucleoid. This Yersinia pestis bv. Antiqua (strain Nepal516) protein is Nucleoid-associated protein YPN_2714.